We begin with the raw amino-acid sequence, 217 residues long: Putative thymidylate synthase (217 aa).

Residue Cys139 is part of the active site.

It belongs to the thymidylate synthase family. Archaeal-type ThyA subfamily. As to quaternary structure, monomer.

The protein localises to the cytoplasm. It participates in pyrimidine metabolism; dTTP biosynthesis. In terms of biological role, may catalyze the biosynthesis of dTMP using an unknown cosubstrate. This Methanosarcina barkeri (strain Fusaro / DSM 804) protein is Putative thymidylate synthase.